The primary structure comprises 212 residues: Deoxyribose-phosphate aldolase (212 aa).

The active-site Proton donor/acceptor is the aspartate 89. Lysine 151 functions as the Schiff-base intermediate with acetaldehyde in the catalytic mechanism. The Proton donor/acceptor role is filled by lysine 180.

It belongs to the DeoC/FbaB aldolase family. DeoC type 1 subfamily.

Its subcellular location is the cytoplasm. It catalyses the reaction 2-deoxy-D-ribose 5-phosphate = D-glyceraldehyde 3-phosphate + acetaldehyde. The protein operates within carbohydrate degradation; 2-deoxy-D-ribose 1-phosphate degradation; D-glyceraldehyde 3-phosphate and acetaldehyde from 2-deoxy-alpha-D-ribose 1-phosphate: step 2/2. Functionally, catalyzes a reversible aldol reaction between acetaldehyde and D-glyceraldehyde 3-phosphate to generate 2-deoxy-D-ribose 5-phosphate. The sequence is that of Deoxyribose-phosphate aldolase from Clostridium botulinum (strain ATCC 19397 / Type A).